We begin with the raw amino-acid sequence, 108 residues long: Integration host factor subunit alpha (108 aa).

This sequence belongs to the bacterial histone-like protein family. In terms of assembly, heterodimer of an alpha and a beta chain.

Functionally, this protein is one of the two subunits of integration host factor, a specific DNA-binding protein that functions in genetic recombination as well as in transcriptional and translational control. This is Integration host factor subunit alpha from Bartonella henselae (strain ATCC 49882 / DSM 28221 / CCUG 30454 / Houston 1) (Rochalimaea henselae).